A 392-amino-acid polypeptide reads, in one-letter code: PMA1 stabilization in the Golgi protein 1 (392 aa).

A signal peptide spans 1–22 (MRFHDSILIFFSLASLYQHVHG). 2 O-linked (Man) threonine glycosylation sites follow: Thr34 and Thr35. Residue Ser36 is glycosylated (O-linked (Man) serine). Thr45 carries an O-linked (Man) threonine glycan. Ser49 is a glycosylation site (O-linked (Man) serine). Residues Thr55, Thr57, and Thr63 are each glycosylated (O-linked (Man) threonine). Ser65 is a glycosylation site (O-linked (Man) serine). Thr71 is a glycosylation site (O-linked (Man) threonine). O-linked (Man) serine glycosylation occurs at Ser80. O-linked (Man) threonine glycosylation is found at Thr89 and Thr99. Ser107 is a glycosylation site (O-linked (Man) serine). 2 O-linked (Man) threonine glycosylation sites follow: Thr108 and Thr112. O-linked (Man) serine glycosylation is found at Ser114 and Ser115. Thr117 carries O-linked (Man) threonine glycosylation. O-linked (Man) serine glycosylation is found at Ser119 and Ser148. Thr156 carries an O-linked (Man) threonine glycan. Residue Ser171 is glycosylated (O-linked (Man) serine). O-linked (Man) threonine glycosylation is present at Thr176. O-linked (Man) serine glycosylation is present at Ser181. Thr188, Thr192, Thr195, and Thr199 each carry an O-linked (Man) threonine glycan. Residues Ser203 and Ser215 are each glycosylated (O-linked (Man) serine). Topologically, residues 230–317 (DIPATFFSSE…DAGITNDQWY (88 aa)) are lumenal. A helical membrane pass occupies residues 318 to 338 (YVALSIPTVVVVFFVFMYFFL). The Cytoplasmic portion of the chain corresponds to 339 to 392 (YVNGKNRDFTDVTRKALNKKRRVLGKFSEMKKFKNMKNHKYTELPSYKKTSKQN).

In terms of assembly, interacts with EXP1. PSG1-N' interacts with ERAD-related proteins involved in PMA1 quality control including EPS1, CDC48, UBX2 and SSM4. PSG1-C' interacts with the TLG1/2 SNARE complex proteins TLG1, TLG2 and VTI1. Post-translationally, the precursor protein is cleaved into two polypeptide chains, PSG1-N' and PSG1-C'. The cleavage is performed in the Golgi apparatus by Ca(+)-dependent serine protease KEX2 between Arg-229 and Asp-230. In terms of processing, PSG1-N' is highly O-mannosylated.

Its subcellular location is the golgi apparatus lumen. The protein localises to the cytoplasmic vesicle. The protein resides in the COPI-coated vesicle membrane. With EXP1, the specific cargo receptor protein for the plasma membrane ATPase PMA1, is involved in the transport and/or maturation of PMA1. EXP1 and PSG1 probably act sequentially to promote PMA1 sorting between the ER and the Golgi, with EXP1 promoting PMA1 export from the ER to the Golgi while PSG1 has a role in PMA1 maturation or quality control in the Golgi. PSG1 might also couple PMA1 sorting and maturation in the early secretory pathway with the glycosylation machinery. Functionally, PSG1 is cleaved by KEX2 in two stable peptides, PSG1-N' and PSG1-C', the former supporting a role in maturation quality control, the latter having a role in modulating vesicular trafficking. In Saccharomyces cerevisiae (strain ATCC 204508 / S288c) (Baker's yeast), this protein is PMA1 stabilization in the Golgi protein 1.